Reading from the N-terminus, the 131-residue chain is Small ribosomal subunit protein uS8 (131 aa).

Belongs to the universal ribosomal protein uS8 family. Part of the 30S ribosomal subunit. Contacts proteins S5 and S12.

Its function is as follows. One of the primary rRNA binding proteins, it binds directly to 16S rRNA central domain where it helps coordinate assembly of the platform of the 30S subunit. This is Small ribosomal subunit protein uS8 from Shewanella amazonensis (strain ATCC BAA-1098 / SB2B).